A 311-amino-acid chain; its full sequence is Syndecan-1 (311 aa).

The first 22 residues, 1 to 22 (MRRAALWLWLCALALRLQPALP), serve as a signal peptide directing secretion. At 23 to 255 (QIVAVNVPPE…SLLDRKEVLG (233 aa)) the chain is on the extracellular side. Disordered regions lie at residues 29–59 (VPPE…LSRQ) and 152–184 (SHPH…VEGG). The span at 32 to 42 (EDQDGSGDDSD) shows a compositional bias: acidic residues. A glycan (O-linked (Xyl...) (chondroitin sulfate) serine) is linked at serine 37. Residue asparagine 43 is glycosylated (N-linked (GlcNAc...) asparagine). O-linked (Xyl...) (heparan sulfate) serine glycans are attached at residues serine 45 and serine 47. Serine 207 and serine 217 each carry an O-linked (Xyl...) (chondroitin sulfate) serine glycan. A helical transmembrane segment spans residues 256-276 (GVIAGGLVGLIFAVCLVAFML). Residues 277–311 (YRMKKKDEGSYSLEEPKQANGGAYQKPTKQEEFYA) lie on the Cytoplasmic side of the membrane. Residues 285 to 311 (GSYSLEEPKQANGGAYQKPTKQEEFYA) form a disordered region. Serine 286 is subject to Phosphoserine.

Belongs to the syndecan proteoglycan family. As to quaternary structure, interacts with CDCP1. Interacts (via C-terminus) with TIAM1 (via PDZ domain). Interacts with MDK. Post-translationally, shedding is enhanced by a number of factors such as heparanase, thrombin or EGF. Also by stress and wound healing. PMA-mediated shedding is inhibited by TIMP3.

The protein localises to the membrane. It localises to the secreted. The protein resides in the extracellular exosome. Its function is as follows. Cell surface proteoglycan that contains both heparan sulfate and chondroitin sulfate and that links the cytoskeleton to the interstitial matrix. Regulates exosome biogenesis in concert with SDCBP and PDCD6IP. Able to induce its own expression in dental mesenchymal cells and also in the neighboring dental epithelial cells via an MSX1-mediated pathway. This Mus musculus (Mouse) protein is Syndecan-1.